Reading from the N-terminus, the 604-residue chain is Kelch-like protein 15 (604 aa).

In terms of domain architecture, BTB spans 31–98 (LDVTLVIEDH…MYYGTIELSM (68 aa)). In terms of domain architecture, BACK spans 133-237 (CAEIMRLLDD…TPSSVFEKVK (105 aa)). Kelch repeat units follow at residues 328 to 379 (FVFL…VIGK), 381 to 426 (IYAV…VLNN), 428 to 473 (LFIT…NKSK), 489 to 542 (KLYV…VLDK), and 544 to 590 (IMVL…VCNL).

Homodimer. Dimerization does not affect PPP2R5B-binding, but is required for its proteasomal degradation. Interacts with CUL3. Directly interacts with PPP2R5B; this interaction leads to PPP2R5B proteasomal degradation. Interacts with RBBP8/CtIP; this interaction leads to RBBP8 proteasomal degradation. Interacts with PACMP micropeptide; interaction prevents ubiquitination and degradation of RBBP8/CtIP.

Its subcellular location is the nucleus. Its pathway is protein modification; protein ubiquitination. Functionally, substrate-specific adapter for CUL3 E3 ubiquitin-protein ligase complex. Acts as an adapter for CUL3 to target the serine/threonine-protein phosphatase 2A (PP2A) subunit PPP2R5B for ubiquitination and subsequent proteasomal degradation, thus promoting exchange with other regulatory subunits and regulating PP2A holoenzyme composition. Acts as an adapter for CUL3 to target the DNA-end resection factor RBBP8/CtIP for ubiquitination and subsequent proteasomal degradation. Through the regulation of RBBP8/CtIP protein turnover, plays a key role in DNA damage response, favoring DNA double-strand repair through error-prone non-homologous end joining (NHEJ) over error-free, RBBP8-mediated homologous recombination (HR). The chain is Kelch-like protein 15 (Klhl15) from Mus musculus (Mouse).